A 328-amino-acid polypeptide reads, in one-letter code: UPF0194 membrane protein YE2891 (328 aa).

A signal peptide spans 1 to 22; sequence MNRKKIIVAVVIVALLAAIGYG. Coiled coils occupy residues 80-109 and 139-208; these read YVNALKQAQANVQSAQAQLALLKAGYREEE and ANKA…TTLL.

The protein belongs to the UPF0194 family.

It localises to the periplasm. This is UPF0194 membrane protein YE2891 from Yersinia enterocolitica serotype O:8 / biotype 1B (strain NCTC 13174 / 8081).